Reading from the N-terminus, the 325-residue chain is TNFAIP3-interacting protein 3 (325 aa).

2 disordered regions span residues Met1–Lys30 and Arg84–Glu129. The span at Ser17–Thr28 shows a compositional bias: basic and acidic residues. A coiled-coil region spans residues Ser27–Cys265. The ubiquitin-binding domain (UBD) stretch occupies residues His190–Ala248.

In terms of assembly, interacts with TNFAIP3. Interacts with polyubiquitin. In terms of tissue distribution, highly expressed in lung, lymph node, thymus and fetal liver. Expressed at lower levels in bone marrow, brain, kidney, spleen, leukocytes and tonsils. Could be detected in heart, salivary gland, adrenal gland, pancreas, ovary and fetal brain. High levels detected in liver, colon, small intestine, muscle, stomach, testis, placenta, thyroid, uterus, prostate, skin and PBL.

In terms of biological role, binds to zinc finger protein TNFAIP3 and inhibits NF-kappa-B activation induced by tumor necrosis factor, Toll-like receptor 4 (TLR4), interleukin-1 and 12-O-tetradecanoylphorbol-13-acetate. Overexpression inhibits NF-kappa-B-dependent gene expression in response to lipopolysaccharide at a level downstream of TRAF6 and upstream of IKBKB. NF-kappa-B inhibition is independent of TNFAIP3 binding. This chain is TNFAIP3-interacting protein 3, found in Homo sapiens (Human).